The following is a 106-amino-acid chain: ATPase inhibitor, mitochondrial (106 aa).

The transit peptide at 1–25 (MAGSALAVRARFGVWGMKVLQTRGF) directs the protein to the mitochondrion. Positions 26–52 (VSDSSDSMDTGAGSIREAGGAFGKREK) are N-terminal inhibitory region. The disordered stretch occupies residues 26–58 (VSDSSDSMDTGAGSIREAGGAFGKREKAEEDRY). At Ser-39 the chain carries Phosphoserine. Basic and acidic residues predominate over residues 48-58 (GKREKAEEDRY). Residues 60–106 (REKTKEQLAALRKHHEDEIDHHSKEIERLQKQIERHKKKIQQLKNNH) are a coiled coil. The interval 74-106 (HEDEIDHHSKEIERLQKQIERHKKKIQQLKNNH) is antiparallel alpha-helical coiled coil region. Lys-103 is subject to N6-succinyllysine.

This sequence belongs to the ATPase inhibitor family. Homodimer; represents the active form and is present at a pH value below 6.5. Homotetramer; represents the inactive form and is present at a pH value above 7.0.

Its subcellular location is the mitochondrion. Endogenous F(1)F(o)-ATPase inhibitor limiting ATP depletion when the mitochondrial membrane potential falls below a threshold and the F(1)F(o)-ATP synthase starts hydrolyzing ATP to pump protons out of the mitochondrial matrix. Required to avoid the consumption of cellular ATP when the F(1)F(o)-ATP synthase enzyme acts as an ATP hydrolase. Indirectly acts as a regulator of heme synthesis in erythroid tissues: regulates heme synthesis by modulating the mitochondrial pH and redox potential, allowing FECH to efficiently catalyze the incorporation of iron into protoporphyrin IX to produce heme. The sequence is that of ATPase inhibitor, mitochondrial from Mus musculus (Mouse).